Reading from the N-terminus, the 81-residue chain is Fungal defensin micasin (81 aa).

The N-terminal stretch at 1–21 is a signal peptide; it reads MQFTKLATILLVSLMGSAAIA. Positions 22–43 are excised as a propeptide; the sequence is APATNNAAVDAAADATPAVEKR. 3 disulfides stabilise this stretch: C47/C68, C54/C76, and C58/C78.

Belongs to the invertebrate defensin family.

Its subcellular location is the secreted. Functionally, antibacterial peptide with potent activity against both Gram-positive and Gram-negative bacteria. May kill bacteria via an intracellular action mode to affect protein folding. Does not show effects on tested filamentous fungi or on the yeast S.cerevisiae. Does not act by destroying the membrane integrity, which is consistent with its nonamphiphilic architecture. Acts more rapidly than vancomycin, suggesting it does not act by inhibiting cell-wall biosynthesis. Does not cause hemolysis and has no cytotoxic effect on HEK cells. In vivo, is as efficient as vancomycin to protect mouse peritonitis models from S.aureus and P.aeruginosa infections. In Arthroderma otae (Microsporum canis), this protein is Fungal defensin micasin.